The primary structure comprises 1075 residues: Protein EXPORTIN 1A (1075 aa).

Positions Ala-37–Gln-103 constitute an Importin N-terminal domain. 12 HEAT repeats span residues Asp-91–Lys-130, Ala-135–Asp-171, Ile-232–Gly-267, Ser-336–Asp-373, Met-388–Asn-425, Asp-474–Glu-513, Lys-563–Arg-600, Pro-612–Asp-649, Leu-682–Asp-719, Arg-756–Arg-793, Ala-798–Glu-835, and Glu-894–Asp-934.

Belongs to the exportin family. As to quaternary structure, interacts with RAN1. In terms of tissue distribution, expressed ubiquitously, with higher levels in stems, inflorescences and roots. Present in mature pollen grains, unpollinated pistils, and 2-week-old seedlings.

The protein resides in the nucleus. It is found in the nuclear pore complex. It localises to the nucleus membrane. In terms of biological role, receptor for the leucine-rich nuclear export signal (NES). Binds cooperatively to the NES on its target protein and to the small GTPase Ran in its active GTP-bound form. Required for the maternal-to-embryonic transition and during gametophyte development. Involved in heat-induced oxidative stress basal resistance. This is Protein EXPORTIN 1A from Arabidopsis thaliana (Mouse-ear cress).